An 800-amino-acid polypeptide reads, in one-letter code: Nucleolar RNA helicase 2-B (800 aa).

The segment covering 1 to 14 (MPGKVYTDEMEGKS) has biased composition (basic and acidic residues). The segment at 1–200 (MPGKVYTDEM…TDTSEITAAN (200 aa)) is disordered. Polar residues predominate over residues 114–124 (ETNISLSSQGG). The short motif at 221-249 (GDFSKFPISKDTIKNLQAKGVTYLFPIQS) is the Q motif element. The region spanning 252 to 431 (FHTVYSGKDV…KKYMRKQYEK (180 aa)) is the Helicase ATP-binding domain. 265 to 272 (ARTGTGKT) contributes to the ATP binding site. A DEAD box motif is present at residues 374–377 (DEVD). Residues 464-620 (DIVQVYSGSH…SSADAIKSLD (157 aa)) form the Helicase C-terminal domain. A disordered region spans residues 750-800 (IQESERSFDGPRNRSFGGRGRRPFDRRNNSRNSSGGGGGRRGRSGGFRRGR). Over residues 752–761 (ESERSFDGPR) the composition is skewed to basic and acidic residues. Over residues 789 to 800 (RRGRSGGFRRGR) the composition is skewed to basic residues.

This sequence belongs to the DEAD box helicase family. DDX21/DDX50 subfamily. As to expression, widely expressed. Expressed at higher level in stomach. Expressed at lower level compared to ddx21-a.

The protein localises to the nucleus. It is found in the nucleolus. The protein resides in the nucleoplasm. Its subcellular location is the cytoplasm. It localises to the cytosol. The protein localises to the mitochondrion. It catalyses the reaction ATP + H2O = ADP + phosphate + H(+). RNA helicase that acts as a sensor of the transcriptional status of both RNA polymerase (Pol) I and II: promotes ribosomal RNA (rRNA) processing and transcription from polymerase II (Pol II). Binds various RNAs, such as rRNAs, snoRNAs, 7SK and, at lower extent, mRNAs. In the nucleolus, localizes to rDNA locus, where it directly binds rRNAs and snoRNAs, and promotes rRNA transcription, processing and modification. Required for rRNA 2'-O-methylation, possibly by promoting the recruitment of late-acting snoRNAs SNORD56 and SNORD58 with pre-ribosomal complexes. In the nucleoplasm, binds 7SK RNA and is recruited to the promoters of Pol II-transcribed genes: acts by facilitating the release of P-TEFb from inhibitory 7SK snRNP in a manner that is dependent on its helicase activity, thereby promoting transcription of its target genes. Required to prevent R-loop-associated DNA damage and transcription-associated genomic instability. This is Nucleolar RNA helicase 2-B (ddx21-b) from Xenopus laevis (African clawed frog).